A 244-amino-acid chain; its full sequence is tRNA pseudouridine synthase A (244 aa).

Residue Asp-52 is the Nucleophile of the active site. Tyr-110 is a binding site for substrate.

This sequence belongs to the tRNA pseudouridine synthase TruA family. In terms of assembly, homodimer.

It catalyses the reaction uridine(38/39/40) in tRNA = pseudouridine(38/39/40) in tRNA. Formation of pseudouridine at positions 38, 39 and 40 in the anticodon stem and loop of transfer RNAs. The chain is tRNA pseudouridine synthase A from Brevibacillus brevis (strain 47 / JCM 6285 / NBRC 100599).